The primary structure comprises 813 residues: Acyl-homoserine lactone acylase QuiP (813 aa).

The N-terminal stretch at 1–26 (MAAPAFPPFRLRFATAATLLGMLGLA) is a signal peptide. The active-site Nucleophile is the Ser-262.

The protein belongs to the peptidase S45 family. Heterodimer of an alpha subunit and a beta subunit processed from the same precursor.

Its subcellular location is the periplasm. The enzyme catalyses an N-acyl-L-homoserine lactone + H2O = L-homoserine lactone + a carboxylate. Functionally, catalyzes the deacylation of acyl-homoserine lactone (AHL or acyl-HSL), releasing homoserine lactone (HSL) and the corresponding fatty acid. Possesses a specificity for the degradation of long-chain acyl-HSLs (side chains of seven or more carbons in length). This is Acyl-homoserine lactone acylase QuiP (quiP) from Pseudomonas putida (strain ATCC 47054 / DSM 6125 / CFBP 8728 / NCIMB 11950 / KT2440).